The following is a 358-amino-acid chain: DnaJ homolog subfamily B member 11 (358 aa).

An N-terminal signal peptide occupies residues 1-22 (MAPQNLSTFCLLLLYLIGAVIA). The J domain maps to 25-90 (DFYKILGVPR…EKRKQYDTYG (66 aa)). T188 is modified (phosphothreonine). N261 carries an N-linked (GlcNAc...) asparagine glycan.

Part of a large chaperone multiprotein complex comprising DNAJB11, HSP90B1, HSPA5, HYOU, PDIA2, PDIA4, PDIA6, PPIB, SDF2L1, UGGT1 and very small amounts of ERP29, but not, or at very low levels, CALR nor CANX. Binds to denatured substrates in an ATP-independent manner. Interacts via the J domain with HSPA5 in an ATP-dependent manner. In terms of processing, contains high-mannose Endo H-sensitive carbohydrates. Post-translationally, cys-169, Cys-171, Cys-193 and Cys-196 form intramolecular disulfide bonds. The preferential partner for each Cys is not known.

It is found in the endoplasmic reticulum lumen. Its function is as follows. As a co-chaperone for HSPA5 it is required for proper folding, trafficking or degradation of proteins. Binds directly to both unfolded proteins that are substrates for ERAD and nascent unfolded peptide chains, but dissociates from the HSPA5-unfolded protein complex before folding is completed. May help recruiting HSPA5 and other chaperones to the substrate. Stimulates HSPA5 ATPase activity. It is necessary for maturation and correct trafficking of PKD1. The polypeptide is DnaJ homolog subfamily B member 11 (Dnajb11) (Rattus norvegicus (Rat)).